An 823-amino-acid chain; its full sequence is Endoplasmin homolog (823 aa).

Positions Met1 to Gly23 are cleaved as a signal peptide. The disordered stretch occupies residues Asn29–Val60. The segment covering Asp39–Gly48 has biased composition (basic and acidic residues). ATP-binding positions include Glu106, Asn110, Asp154, Met159, Asn167, Lys173, Ser174–Gly175, Gln194–Phe199, Phe199, and Thr246. N-linked (GlcNAc...) asparagine glycosylation is present at Asn110. A disordered region spans residues Glu289–Thr328. Residues Thr290–Asp321 are compositionally biased toward acidic residues. 2 N-linked (GlcNAc...) asparagine glycosylation sites follow: Asn452 and Asn620. Acidic residues predominate over residues Val777 to Glu792. The disordered stretch occupies residues Val777 to Leu823. The Prevents secretion from ER motif lies at Lys820–Leu823.

Belongs to the heat shock protein 90 family. Interacts with FKBP42. Interacts with P23-1. As to expression, ubiquitous.

The protein resides in the endoplasmic reticulum lumen. May have a molecular chaperone role in the processing of secreted materials. Required for shoot apical meristem (SAM), root apical meristem (RAM) and floral meristem (FM) formation, probably by regulating the folding of CLAVATA proteins (CLVs). Also involved in pollen tube elongation. Involved in resistance to tunicamycin- or high calcium-induced ER stresses. Possesses ATPase activity. The protein is Endoplasmin homolog of Arabidopsis thaliana (Mouse-ear cress).